A 258-amino-acid polypeptide reads, in one-letter code: Clathrin light chain 3 (258 aa).

Over residues 1–18 (MSSTLSNEESGLGDSNRS) the composition is skewed to polar residues. Positions 1 to 96 (MSSTLSNEES…PPPSAMEKEE (96 aa)) are disordered. At serine 2 the chain carries N-acetylserine. Residues 34–50 (SRFQSQRFDSSFSNFDS) show a composition bias toward low complexity. A compositionally biased stretch (polar residues) spans 66–79 (RPETQSPPSINSFD). Residues 90–152 (SAMEKEEGFA…TIENNKKLNR (63 aa)) are involved in binding clathrin heavy chain. Positions 105-164 (RLNALRLEEKEKEEKEMVQQILEAAEQYKAEFYSKRNVTIENNKKLNREKEKFFLENQEK) form a coiled coil. Residues 224-234 (LKHNPPTHMKP) are compositionally biased toward basic residues. Residues 224–258 (LKHNPPTHMKPKLPSPSGADPNVSVSEQVTVTEKL) form a disordered region. A compositionally biased stretch (polar residues) spans 246 to 258 (VSVSEQVTVTEKL).

The protein belongs to the clathrin light chain family. Clathrin coats are formed from molecules containing 3 heavy chains and 3 light chains.

Its subcellular location is the cytoplasmic vesicle membrane. The protein resides in the membrane. The protein localises to the coated pit. Functionally, clathrin is the major protein of the polyhedral coat of coated pits and vesicles. The protein is Clathrin light chain 3 of Arabidopsis thaliana (Mouse-ear cress).